Reading from the N-terminus, the 209-residue chain is Mitochondrial import inner membrane translocase subunit Tim23 (209 aa).

3 helical membrane-spanning segments follow: residues 73 to 93 (FELA…FGAM), 125 to 145 (ALWA…GVII), and 172 to 194 (GGLR…YALY).

Belongs to the Tim17/Tim22/Tim23 family. As to quaternary structure, component of the TIM23 complex at least composed of TIMM23, TIMM17 (TIMM17A or TIMM17B) and TIMM50; within this complex, directly interacts with TIMM50. The complex interacts with the TIMM44 component of the PAM complex and with DNAJC15. Upon mitochondrial depolarization, interacts with PINK1; the interaction is required for PINK1 accumulation at the outer mitochondrial membrane, kinase activation by autophosphorylation and PRKN recruitement to mitochondria.

It localises to the mitochondrion inner membrane. Essential component of the TIM23 complex, a complex that mediates the translocation of transit peptide-containing proteins across the mitochondrial inner membrane. Has a role in the activation of stress-induced mitophagy by protecting PINK1 from OMA1-mediated degradation and facilitating its accumulation at the outer mitochondrial membrane in response to depolarization. This Bos taurus (Bovine) protein is Mitochondrial import inner membrane translocase subunit Tim23 (TIMM23).